A 78-amino-acid chain; its full sequence is Large ribosomal subunit protein bL31 (78 aa).

Belongs to the bacterial ribosomal protein bL31 family. Type A subfamily. In terms of assembly, part of the 50S ribosomal subunit.

Functionally, binds the 23S rRNA. The sequence is that of Large ribosomal subunit protein bL31 from Rickettsia prowazekii (strain Madrid E).